We begin with the raw amino-acid sequence, 1277 residues long: Neural cell adhesion molecule L1 (1277 aa).

The N-terminal stretch at 1-34 (MAHTQRQQGGSRGQWSRCLLLLLLLPLAAQPGRA) is a signal peptide. Residues 35-1135 (AIQIPSSYYI…VQPSFATQGW (1101 aa)) are Extracellular-facing. Ig-like C2-type domains follow at residues 51–140 (PAIT…TAVS), 150–241 (PPVQ…EPIT), 256–344 (PQMM…YTVT), 349–437 (PYWT…TNVY), and 443–528 (PQIL…AEVE). 5 disulfides stabilise this stretch: Cys72–Cys129, Cys173–Cys224, Cys280–Cys328, Cys370–Cys421, and Cys465–Cys514. The N-linked (GlcNAc...) asparagine glycan is linked to Asn317. 3 N-linked (GlcNAc...) asparagine glycosylation sites follow: Asn503, Asn520, and Asn531. Positions 532–623 (RTVILSPPQA…DMVEASSTLT (92 aa)) constitute an Ig-like C2-type 6 domain. A disulfide bridge links Cys554 with Cys607. 5 Fibronectin type-III domains span residues 630–725 (PPVH…TPAD), 730–824 (NPED…SGED), 829–931 (APLN…TPEG), 935–1030 (PPMS…TLEG), and 1032–1129 (PPAN…VQPS). The segment at 714–740 (SKLSDLYKTPADAPDSNPEDVRSESTD) is disordered. N-linked (GlcNAc...) asparagine glycans are attached at residues Asn794 and Asn839. Asn1035, Asn1046, Asn1068, Asn1083, and Asn1108 each carry an N-linked (GlcNAc...) asparagine glycan. Residues 1136-1156 (FIGVVSAVVLLLLVLLILCFI) traverse the membrane as a helical segment. Over 1157–1277 (KRSKGGKYSV…ATNGAPSFLN (121 aa)) the chain is Cytoplasmic. Disordered regions lie at residues 1163-1216 (KYSV…LCSE) and 1232-1277 (NMDE…SFLN). The span at 1165 to 1201 (SVKDKEDGPMDSEARPMKDETFGEYRSLESDLEEKRT) shows a compositional bias: basic and acidic residues. A compositionally biased stretch (polar residues) spans 1232 to 1242 (NMDESLASQFS). Positions 1255 to 1277 (PDNSPLNPAANPPATNGAPSFLN) are enriched in low complexity.

Belongs to the immunoglobulin superfamily. L1/neurofascin/NgCAM family.

The protein localises to the cell membrane. It is found in the cell projection. It localises to the growth cone. Neural cell adhesion molecule involved in the dynamics of cell adhesion and in the generation of transmembrane signals at tyrosine kinase receptors. During brain development, critical in multiple processes, including neuronal migration, axonal growth and fasciculation, and synaptogenesis. In the mature brain, plays a role in the dynamics of neuronal structure and function, including synaptic plasticity. The polypeptide is Neural cell adhesion molecule L1 (l1cam) (Takifugu rubripes (Japanese pufferfish)).